The primary structure comprises 168 residues: MLPAALLRRPGLGRLVRHARAYAEAAAAPAAASGPNQMSFTFASPTQVFFNGANVRQVDVPTLTGAFGILAAHVPTLQVLRPGLVVVHAEDGTTSKYFVSSGSIAVNADSSVQLLAEEAVTLDMLDLGAAKANLEKAQAELVGTADEATRAEIQIRIEANEALVKALE.

The transit peptide at 1–22 directs the protein to the mitochondrion; sequence MLPAALLRRPGLGRLVRHARAY. 2 positions are modified to N6-acetyllysine; alternate: lysine 136 and lysine 165. N6-succinyllysine; alternate is present on residues lysine 136 and lysine 165.

It belongs to the ATPase epsilon chain family. Component of the ATP synthase complex composed at least of ATP5F1A/subunit alpha, ATP5F1B/subunit beta, ATP5MC1/subunit c (homooctomer), MT-ATP6/subunit a, MT-ATP8/subunit 8, ATP5ME/subunit e, ATP5MF/subunit f, ATP5MG/subunit g, ATP5MK/subunit k, ATP5MJ/subunit j, ATP5F1C/subunit gamma, ATP5F1D/subunit delta, ATP5F1E/subunit epsilon, ATP5PF/subunit F6, ATP5PB/subunit b, ATP5PD/subunit d, ATP5PO/subunit OSCP. ATP synthase complex consists of a soluble F(1) head domain (subunits alpha(3) and beta(3)) - the catalytic core - and a membrane F(0) domain - the membrane proton channel (subunits c, a, 8, e, f, g, k and j). These two domains are linked by a central stalk (subunits gamma, delta, and epsilon) rotating inside the F1 region and a stationary peripheral stalk (subunits F6, b, d, and OSCP). Component of a complex composed at least by ATPIF1, ATP5F1A, ATP5F1B, ATP5F1C AND ATP5F1E.

Its subcellular location is the mitochondrion. The protein localises to the mitochondrion inner membrane. Its function is as follows. Subunit delta, of the mitochondrial membrane ATP synthase complex (F(1)F(0) ATP synthase or Complex V) that produces ATP from ADP in the presence of a proton gradient across the membrane which is generated by electron transport complexes of the respiratory chain. ATP synthase complex consist of a soluble F(1) head domain - the catalytic core - and a membrane F(1) domain - the membrane proton channel. These two domains are linked by a central stalk rotating inside the F(1) region and a stationary peripheral stalk. During catalysis, ATP synthesis in the catalytic domain of F(1) is coupled via a rotary mechanism of the central stalk subunits to proton translocation. In vivo, can only synthesize ATP although its ATP hydrolase activity can be activated artificially in vitro. With the central stalk subunit gamma, is essential for the biogenesis of F(1) catalytic part of the ATP synthase complex namely in the formation of F1 assembly intermediate. The chain is ATP synthase F(1) complex subunit delta, mitochondrial from Homo sapiens (Human).